The chain runs to 429 residues: Enolase (429 aa).

Residue Gln-163 coordinates (2R)-2-phosphoglycerate. Catalysis depends on Glu-205, which acts as the Proton donor. Mg(2+)-binding residues include Asp-242, Glu-287, and Asp-314. Positions 339, 368, 369, and 390 each coordinate (2R)-2-phosphoglycerate. Catalysis depends on Lys-339, which acts as the Proton acceptor.

The protein belongs to the enolase family. It depends on Mg(2+) as a cofactor.

It is found in the cytoplasm. The protein resides in the secreted. Its subcellular location is the cell surface. The catalysed reaction is (2R)-2-phosphoglycerate = phosphoenolpyruvate + H2O. It functions in the pathway carbohydrate degradation; glycolysis; pyruvate from D-glyceraldehyde 3-phosphate: step 4/5. Its function is as follows. Catalyzes the reversible conversion of 2-phosphoglycerate (2-PG) into phosphoenolpyruvate (PEP). It is essential for the degradation of carbohydrates via glycolysis. The chain is Enolase from Salinibacter ruber (strain DSM 13855 / M31).